The following is a 424-amino-acid chain: Type II methyltransferase M.BspRI (424 aa).

An SAM-dependent MTase C5-type domain is found at 58–408 (FNVLSLFCGA…KSIAQFAADY (351 aa)). The active-site S-methylcysteine intermediate is the cysteine 156. The residue at position 181 (cysteine 181) is an S-methylcysteine; by autocatalysis.

The protein belongs to the class I-like SAM-binding methyltransferase superfamily. C5-methyltransferase family. As to quaternary structure, monomer. In terms of processing, in the absence of DNA, can self-methylate two cysteine residues.

It carries out the reaction a 2'-deoxycytidine in DNA + S-adenosyl-L-methionine = a 5-methyl-2'-deoxycytidine in DNA + S-adenosyl-L-homocysteine + H(+). Its function is as follows. A methylase, recognizes the double-stranded sequence 5'-GGCC-3', methylates C-3 on both strands, and protects the DNA from cleavage by the BspRI endonuclease. This chain is Type II methyltransferase M.BspRI (bspRIM), found in Lysinibacillus sphaericus (Bacillus sphaericus).